The primary structure comprises 319 residues: MSLSKCFKNSIYPSINLPLTLSLLEEWCLIYICGIDSKKHLQNQFTIDINCLKKEEYKLCAHCNFNGKVWATMFIFHYKKGFAYIIRKSIAKIQIKELKKYAIFSKVEIRELDDIYLFGLSGFNAKFFLSKNFVDIPNKNCSLISNQDRTILWFSEPCERFLLVLSLKDLLLLKRKENEITLLNNSKQWLLFDIEAGFPIIDKQTSQKFLPQSINLILLQAVSFDKGCYYGQETIARVFYKNLNKYSLYLLSSKGNINPKIGSIIEMKKEEKWYRIGFLLAIVHVEFNRTVIQAVLNKSINIQNIFRIYEFKNIFLIKN.

2 residues coordinate folate: tryptophan 27 and tryptophan 189.

This sequence belongs to the tRNA-modifying YgfZ family.

It localises to the cytoplasm. Functionally, folate-binding protein involved in regulating the level of ATP-DnaA and in the modification of some tRNAs. It is probably a key factor in regulatory networks that act via tRNA modification, such as initiation of chromosomal replication. This chain is tRNA-modifying protein YgfZ, found in Buchnera aphidicola subsp. Schizaphis graminum (strain Sg).